Consider the following 241-residue polypeptide: Golgi-associated RAB2 interactor protein 6 (241 aa).

The protein belongs to the GARIN family.

This is Golgi-associated RAB2 interactor protein 6 from Homo sapiens (Human).